The following is a 287-amino-acid chain: (S)-phenoxypropionate/alpha-ketoglutarate-dioxygenase (287 aa).

Fe cation is bound by residues H102 and D104. Residues T129 and W242 each contribute to the 2-oxoglutarate site. H257 is a Fe cation binding site. R268 contributes to the 2-oxoglutarate binding site.

This sequence belongs to the TfdA dioxygenase family. In terms of assembly, monomer. Fe cation is required as a cofactor. The cofactor is L-ascorbate.

The enzyme catalyses (S)-2-(4-chloro-2-methylphenoxy)propanoate + 2-oxoglutarate + O2 = 2-methyl-4-chlorophenol + pyruvate + succinate + CO2. It catalyses the reaction (S)-(2,4-dichlorophenoxy)propanoate + 2-oxoglutarate + O2 = 2,4-dichlorophenol + pyruvate + succinate + CO2. It participates in xenobiotic degradation; 2-(2,4-dichlorophenoxy)propanoate degradation. Functionally, involved in the degradation of the phenoxypropionate herbicides. Catalyzes the enantiospecific cleavage of the ether bond in the herbicid S-dichlorprop ((S)-2-(2,4-dichlorophenoxy)propionate)(S-2,4-DP) and S-mecoprop ((S)-2-(4-chloro-2-methylphenoxy)propionate)(S-2,4-MCPP). It can also accept (RS)-2-(4-chloro-2-methylphenoxy)propionate ((RS)-2,4-MCPP) and phenoxyacetate derivatives such as 2,4-dichlorophenoxyacetate (2,4-D), however it can only accept 2-oxoglutarate as oxygen acceptor. In Sphingobium herbicidovorans (strain ATCC 700291 / DSM 11019 / CCUG 56400 / KCTC 2939 / LMG 18315 / NBRC 16415 / MH) (Sphingomonas herbicidovorans), this protein is (S)-phenoxypropionate/alpha-ketoglutarate-dioxygenase.